A 162-amino-acid polypeptide reads, in one-letter code: NADH-quinone oxidoreductase subunit I (162 aa).

2 consecutive 4Fe-4S ferredoxin-type domains span residues 53-83 (LRRY…IEAE) and 93-122 (TRYD…EGPN). The [4Fe-4S] cluster site is built by Cys-63, Cys-66, Cys-69, Cys-73, Cys-102, Cys-105, Cys-108, and Cys-112.

It belongs to the complex I 23 kDa subunit family. As to quaternary structure, NDH-1 is composed of 14 different subunits. Subunits NuoA, H, J, K, L, M, N constitute the membrane sector of the complex. [4Fe-4S] cluster serves as cofactor.

The protein localises to the cell inner membrane. The enzyme catalyses a quinone + NADH + 5 H(+)(in) = a quinol + NAD(+) + 4 H(+)(out). In terms of biological role, NDH-1 shuttles electrons from NADH, via FMN and iron-sulfur (Fe-S) centers, to quinones in the respiratory chain. The immediate electron acceptor for the enzyme in this species is believed to be ubiquinone. Couples the redox reaction to proton translocation (for every two electrons transferred, four hydrogen ions are translocated across the cytoplasmic membrane), and thus conserves the redox energy in a proton gradient. This chain is NADH-quinone oxidoreductase subunit I, found in Maricaulis maris (strain MCS10) (Caulobacter maris).